A 1280-amino-acid chain; its full sequence is MAQSKRHMYNRTPSGSRMSTEASARPLRVGSRVEVIGKGHRGTVAYVGATLFATGKWVGVILDEAKGKNDGTVQGRKYFTCDEGHGIFVRQSQIQVFEDGADTTSPETPDSSASKILKREGADAAAKTSKLRGLKPKKAPTARKTTTRRPKPTRPASTGVAGPSSSLGPSGSASAGELSSSEPSTPAQTPLAAPIIPTPALTSPGAAPPLPSPSKEEEGLRDQVRDLEEKLETLRLKRSEDKAKLKELEKHKIQLEQVQEWKSKMQEQQADLQRRLKEAKEAKEALEAKERYMEEMADTADAIEMATLDKEMAEERAESLQQEVEALKERVDELTTDLEILKAEIEEKGSDGAASSYQLKQLEEQNARLKDALVRMRDLSSSEKQEHVKLQKLMEKKNQELEVVRQQRERLQEELSQAESTIDELKEQVDAALGAEEMVEMLTDRNLNLEEKVRELRETVGDLEAMNEMNDELQENARETELELREQLDMAGARVREAQKRVEAAQETVADYQQTIKKYRQLTAHLQDVNRELTNQQEASVERQQQPPPETFDFKIKFAETKAHAKAIEMELRQMEVAQANRHMSLLTAFMPDSFLRPGGDHDCVLVLLLMPRLICKAELIRKQAQEKFDLSENCSERPGLRGAAGEQLSFAAGLVYSLSLLQATLHRYEHALSQCSVDVYKKVGSLYPEMSAHERSLDFLIELLHKDQLDETVNVEPLTKAIKYYQHLYSIHLAEQPEESTMQLADHIKFTQSALDCMSVEVGRLRAFLQGGQEATDIALLLRDLETSCSDIRQFCKKIRRRMPGTDAPGIPAALAFGSQVSDTLLDCRKHLTWVVAVLQEVAAAAAQLIAPLAENEGLPVAALEELAFKASEQIYGSPSSSPYECLRQSCSILISTMNKLATAMQEGEYDAERPPSKPPPVEPWPAALRAEITDAEGLGLKLEDRETVIKELKKSLKIKGEELSEANVRLSLLEKKLDSAAKDADERIEKVQTRLEETQTLLRKKEKEFEETMDALQADIDQLEAEKTELKQRLNSQSKRTIEGLRGPPPSGIATLVSGIAGEEQQRGGTPGQAPGALPGPGPVKDSPLLLQQISAMRLHISQLQHENSILRGAQMKASLAALPPLHVAKFSLPPHEGPGGNLLSGALYRKTSQLLEKLNQLSTYTHVVDITRSSPACKSPSAQLMEQVAQLKSLSDTIEKLKDEVLKETVTQRPGATVPTDFATFPSSAFLRAKEEQQDDTVYMGKVTFSCAAGLGQRHRLVLTQEQLHQLHGRLIS.

Positions 1-26 (MAQSKRHMYNRTPSGSRMSTEASARP) are disordered. Residues 11–22 (RTPSGSRMSTEA) show a composition bias toward polar residues. Positions 48 to 90 (GATLFATGKWVGVILDEAKGKNDGTVQGRKYFTCDEGHGIFVR) constitute a CAP-Gly domain. The segment at 99 to 223 (DGADTTSPET…SKEEEGLRDQ (125 aa)) is disordered. Residues 102-114 (DTTSPETPDSSAS) show a composition bias toward polar residues. Phosphothreonine occurs at positions 108, 145, 146, and 147. Basic residues predominate over residues 129–152 (SKLRGLKPKKAPTARKTTTRRPKP). Residues 161-205 (AGPSSSLGPSGSASAGELSSSEPSTPAQTPLAAPIIPTPALTSPG) are compositionally biased toward low complexity. Position 179 is a phosphoserine; by PLK1 (Ser179). Ser212 carries the post-translational modification Phosphoserine; by CDK1. Over residues 214 to 223 (SKEEEGLRDQ) the composition is skewed to basic and acidic residues. Coiled-coil stretches lie at residues 214–513 (SKEE…ADYQ) and 942–1048 (LKLE…EGLR). Positions 910-1280 (EYDAERPPSK…LHQLHGRLIS (371 aa)) are interaction with HPS6. Positions 1064–1089 (GEEQQRGGTPGQAPGALPGPGPVKDS) are disordered. The stretch at 1184–1213 (SAQLMEQVAQLKSLSDTIEKLKDEVLKETV) forms a coiled coil.

The protein belongs to the dynactin 150 kDa subunit family. As to quaternary structure, monomer and homodimer. Subunit of dynactin, a multiprotein complex part of a tripartite complex with dynein and a adapter, such as BICDL1, BICD2 or HOOK3. The dynactin complex is built around ACTR1A/ACTB filament and consists of an actin-related filament composed of a shoulder domain, a pointed end and a barbed end. Its length is defined by its flexible shoulder domain. The soulder is composed of 2 DCTN1 subunits, 4 DCTN2 and 2 DCTN3. DCTN1/p150(glued) binds directly to microtubules and to cytoplasmic dynein. The 4 DCNT2 (via N-terminus) bind the ACTR1A filament and act as molecular rulers to determine the length. The pointed end is important for binding dynein-dynactin cargo adapters. Consists of 4 subunits: ACTR10, DCNT4, DCTN5 and DCTN6. The barbed end is composed of a CAPZA1:CAPZB heterodimers, which binds ACTR1A/ACTB filament and dynactin and stabilizes dynactin. Interacts with the C-terminus of MAPRE1, MAPRE2 and MAPRE3. Interacts (via C-terminus) with SNX6. Interacts with CLN3, DYNAP, ECPAS and FBXL5. Interacts with MISP; this interaction regulates its distribution at the cell cortex. Interacts with CEP131. Interacts with CEP126. Interacts with CLIP1. Interacts with dynein intermediate chain and dynein heavy chain. Interacts with PLK1 (via POLO-box domain). Interacts with TBCB. Binds preferentially to tyrosinated microtubules than to detyrosinated microtubules. Interacts with PARD6A. Interacts with HPS6. Interacts with KIF3A. Interacts with BICD2. Interacts with DST (isoform 9). Interacts with DST (isoform 1). Identified in a complex with MREG and RILP. Interacts with BCCIP (isoform 2/alpha). Interacts with DCDC1. Interacts with AKNA. Interacts with DYNC1I2. Interacts with RUFY3 and RUFY4. Ubiquitinated by a SCF complex containing FBXL5, leading to its degradation by the proteasome. In terms of processing, phosphorylation by SLK at Thr-145, Thr-146 and Thr-147 targets DCTN1 to the centrosome. It is uncertain if SLK phosphorylates all three threonines or one or two of them. PLK1-mediated phosphorylation at Ser-179 is essential for its localization in the nuclear envelope and promotes its dissociation from microtubules during early mitosis and positively regulates nuclear envelope breakdown during prophase. Ubiquitous with a high level expression observed in the brain (at protein level).

Its subcellular location is the cytoplasm. It localises to the cytoskeleton. The protein resides in the microtubule organizing center. The protein localises to the centrosome. It is found in the centriole. Its subcellular location is the spindle. It localises to the nucleus envelope. The protein resides in the cell cortex. Part of the dynactin complex that activates the molecular motor dynein for ultra-processive transport along microtubules. Plays a key role in dynein-mediated retrograde transport of vesicles and organelles along microtubules by recruiting and tethering dynein to microtubules. Binds to both dynein and microtubules providing a link between specific cargos, microtubules and dynein. Essential for targeting dynein to microtubule plus ends, recruiting dynein to membranous cargos and enhancing dynein processivity (the ability to move along a microtubule for a long distance without falling off the track). Can also act as a brake to slow the dynein motor during motility along the microtubule. Can regulate microtubule stability by promoting microtubule formation, nucleation and polymerization and by inhibiting microtubule catastrophe in neurons. Inhibits microtubule catastrophe by binding both to microtubules and to tubulin, leading to enhanced microtubule stability along the axon. Plays a role in metaphase spindle orientation. Plays a role in centriole cohesion and subdistal appendage organization and function. Its recruitment to the centriole in a KIF3A-dependent manner is essential for the maintenance of centriole cohesion and the formation of subdistal appendage. Also required for microtubule anchoring at the mother centriole. Plays a role in primary cilia formation. The polypeptide is Dynactin subunit 1 (Dctn1) (Rattus norvegicus (Rat)).